A 474-amino-acid polypeptide reads, in one-letter code: GTPase Der (474 aa).

EngA-type G domains lie at 3–167 and 204–379; these read LTIA…GSER and IRIA…RVWN. GTP contacts are provided by residues 9-16, 56-60, 119-122, 210-217, 257-261, and 322-325; these read GRPNVGKS, DTAGL, NKSE, GRPNTGKS, and NKWD. Residues 380–464 form the KH-like domain; the sequence is RRISTAKLNQ…PVRLSLRASD (85 aa).

This sequence belongs to the TRAFAC class TrmE-Era-EngA-EngB-Septin-like GTPase superfamily. EngA (Der) GTPase family. In terms of assembly, associates with the 50S ribosomal subunit.

GTPase that plays an essential role in the late steps of ribosome biogenesis. This chain is GTPase Der, found in Bartonella tribocorum (strain CIP 105476 / IBS 506).